The sequence spans 905 residues: DNA gyrase subunit A (905 aa).

Positions 35-524 (IPDVRDGLKP…GEFDQDIEDL (490 aa)) constitute a Topo IIA-type catalytic domain. Catalysis depends on Tyr-123, which acts as the O-(5'-phospho-DNA)-tyrosine intermediate. The GyrA-box signature appears at 551–557 (QKRGGKG).

It belongs to the type II topoisomerase GyrA/ParC subunit family. Heterotetramer, composed of two GyrA and two GyrB chains. In the heterotetramer, GyrA contains the active site tyrosine that forms a transient covalent intermediate with DNA, while GyrB binds cofactors and catalyzes ATP hydrolysis.

The protein localises to the cytoplasm. It catalyses the reaction ATP-dependent breakage, passage and rejoining of double-stranded DNA.. A type II topoisomerase that negatively supercoils closed circular double-stranded (ds) DNA in an ATP-dependent manner to modulate DNA topology and maintain chromosomes in an underwound state. Negative supercoiling favors strand separation, and DNA replication, transcription, recombination and repair, all of which involve strand separation. Also able to catalyze the interconversion of other topological isomers of dsDNA rings, including catenanes and knotted rings. Type II topoisomerases break and join 2 DNA strands simultaneously in an ATP-dependent manner. In Rickettsia prowazekii (strain Madrid E), this protein is DNA gyrase subunit A.